A 348-amino-acid chain; its full sequence is Centromere protein L (348 aa).

Belongs to the CENP-L/IML3 family.

It localises to the nucleus. The protein resides in the chromosome. It is found in the centromere. In terms of biological role, probable component of a centromeric complex involved in assembly of kinetochore proteins, mitotic progression and chromosome segregation. The chain is Centromere protein L (cenpl) from Xenopus tropicalis (Western clawed frog).